A 182-amino-acid chain; its full sequence is Probable inosine/xanthosine triphosphatase (182 aa).

Glutamate 65 contacts Mg(2+). Residue 65-66 (EA) participates in substrate binding.

This sequence belongs to the YjjX NTPase family. In terms of assembly, homodimer. It depends on Mg(2+) as a cofactor. Mn(2+) is required as a cofactor.

The catalysed reaction is XTP + H2O = XDP + phosphate + H(+). The enzyme catalyses ITP + H2O = IDP + phosphate + H(+). Phosphatase that hydrolyzes non-canonical purine nucleotides such as XTP and ITP to their respective diphosphate derivatives. Probably excludes non-canonical purines from DNA/RNA precursor pool, thus preventing their incorporation into DNA/RNA and avoiding chromosomal lesions. The sequence is that of Probable inosine/xanthosine triphosphatase from Pyrobaculum neutrophilum (strain DSM 2338 / JCM 9278 / NBRC 100436 / V24Sta) (Thermoproteus neutrophilus).